The following is a 334-amino-acid chain: Terpene synthase 1 (334 aa).

Mg(2+) is bound by residues Asp-82 and Asp-86. Residues 82–86 carry the D(D/E)XX(D/E) motif motif; the sequence is DDIFD. Arg-184 lines the substrate pocket. Asn-230, Ser-234, and Glu-238 together coordinate Mg(2+). An NSE motif motif is present at residues 230-238; the sequence is NDIYSYHRE. The WxxxxxRY motif signature appears at 309–316; the sequence is WSESCTRY.

The protein belongs to the terpene synthase family. Mg(2+) is required as a cofactor.

It catalyses the reaction (2E,6E)-farnesyl diphosphate = gamma-muurolene + diphosphate. The enzyme catalyses (2E,6E)-farnesyl diphosphate = alpha-muurolene + diphosphate. The catalysed reaction is (2E,6E)-farnesyl diphosphate = (-)-(E)-beta-caryophyllene + diphosphate. It carries out the reaction (2E)-geranyl diphosphate = beta-myrcene + diphosphate. In terms of biological role, terpene synthase that catalyzes the cyclization of farnesyl diphosphate (FPP) into a mixture of sesquiterpenes with gamma-muurolene as the most abundant compound and (-)-beta-caryophyllene, alpha-muurolene, and 4 unidentified sesquiterpenes as minor compoundss. TPS1 also shows monoterpene synthase activity and can also use geranyl diphosphate (GPP) as a substrate to convert it into a mixture of cyclic and acyclic monoterpenes, including myrcene and linalool. P.polycephalum has a unique biology and these volatile terpenoids could function in internal communication of P.polycephalum, to mark the territory that have been explored, or they may be involved in chemotaxis. The sequence is that of Terpene synthase 1 from Physarum polycephalum (Slime mold).